The following is a 198-amino-acid chain: MNLAEGVQYISFLILAFLVIGAALGVVLLSNIVYSAFLLGGVFLSISGIYILLNADFVAAAQVLVYVGAVSVLILFAIMLVNKREDFSKIPGRWLRNVSTALVCTGIFALLSTMVLITPWQINETGPFVENTLVTIGKHFFSDYLLPFELASVLLLMAMVGAIILARRDLIPELSEENKTATALTLPERPRELTSASK.

A run of 5 helical transmembrane segments spans residues 9-29 (YISFLILAFLVIGAALGVVLL), 32-52 (IVYSAFLLGGVFLSISGIYIL), 61-81 (AQVLVYVGAVSVLILFAIMLV), 100-120 (TALVCTGIFALLSTMVLITPW), and 145-165 (LLPFELASVLLLMAMVGAIIL).

Belongs to the complex I subunit 6 family.

The protein resides in the membrane. The catalysed reaction is a plastoquinone + NADH + (n+1) H(+)(in) = a plastoquinol + NAD(+) + n H(+)(out). It catalyses the reaction a plastoquinone + NADPH + (n+1) H(+)(in) = a plastoquinol + NADP(+) + n H(+)(out). NDH-1 shuttles electrons from NAD(P)H, via FMN and iron-sulfur (Fe-S) centers, to quinones in the respiratory chain. The immediate electron acceptor for the enzyme in this species is believed to be plastoquinone. Couples the redox reaction to proton translocation (for every two electrons transferred, four hydrogen ions are translocated across the cytoplasmic membrane), and thus conserves the redox energy in a proton gradient. This is NAD(P)H-quinone oxidoreductase chain 6 (ndhG) from Synechocystis sp. (strain ATCC 27184 / PCC 6803 / Kazusa).